Consider the following 494-residue polypeptide: Catalase isozyme 2 (494 aa).

The tract at residues 1-29 (MDPCKFRPSSSFDTKTTTTNAGQPVWNDN) is disordered. Residues 8 to 22 (PSSSFDTKTTTTNAG) show a composition bias toward polar residues. Residues His-65 and Asn-138 contribute to the active site. Tyr-348 lines the heme pocket.

It belongs to the catalase family. In terms of assembly, homotetramer. Requires heme as cofactor.

The protein resides in the peroxisome. It localises to the glyoxysome. The enzyme catalyses 2 H2O2 = O2 + 2 H2O. Occurs in almost all aerobically respiring organisms and serves to protect cells from the toxic effects of hydrogen peroxide. The polypeptide is Catalase isozyme 2 (CAT2) (Hordeum vulgare (Barley)).